The following is a 239-amino-acid chain: Small ribosomal subunit protein eS6A (239 aa).

Phosphoserine occurs at positions 235 and 236.

It belongs to the eukaryotic ribosomal protein eS6 family. Component of the small ribosomal subunit (SSU). Mature yeast ribosomes consist of a small (40S) and a large (60S) subunit. The 40S small subunit contains 1 molecule of ribosomal RNA (18S rRNA) and at least 33 different proteins. The large 60S subunit contains 3 rRNA molecules (25S, 5.8S and 5S rRNA) and at least 46 different proteins. Interacts with snoRNA U3. uS11 interacts with MPP10. Component of the ribosomal small subunit (SSU) processome composed of at least 40 protein subunits and snoRNA U3. Phosphorylated.

Its subcellular location is the cytoplasm. Its function is as follows. Component of the ribosome, a large ribonucleoprotein complex responsible for the synthesis of proteins in the cell. The small ribosomal subunit (SSU) binds messenger RNAs (mRNAs) and translates the encoded message by selecting cognate aminoacyl-transfer RNA (tRNA) molecules. The large subunit (LSU) contains the ribosomal catalytic site termed the peptidyl transferase center (PTC), which catalyzes the formation of peptide bonds, thereby polymerizing the amino acids delivered by tRNAs into a polypeptide chain. The nascent polypeptides leave the ribosome through a tunnel in the LSU and interact with protein factors that function in enzymatic processing, targeting, and the membrane insertion of nascent chains at the exit of the ribosomal tunnel. eS6 is involved in nucleolar processing of pre-18S ribosomal RNA and ribosome assembly. The chain is Small ribosomal subunit protein eS6A (rps601) from Schizosaccharomyces pombe (strain 972 / ATCC 24843) (Fission yeast).